We begin with the raw amino-acid sequence, 279 residues long: Large ribosomal subunit protein uL24m (279 aa).

The transit peptide at 1–31 (MRDLRKLIPRLRGPGTNVLKMKKPLPLHMRT) directs the protein to the mitochondrion. Residues 34-51 (REHLNKSDPTVKDDKSAK) show a composition bias toward basic and acidic residues. Residues 34 to 56 (REHLNKSDPTVKDDKSAKPELPF) are disordered. Residues 70-100 (KGDYVYVHQGPLKGKWGRVVETNKYTNGITI) enclose the KOW domain. The disordered stretch occupies residues 185 to 204 (PRPKTEDKPKDPEGKLDTKN). Positions 187 to 202 (PKTEDKPKDPEGKLDT) are enriched in basic and acidic residues.

It belongs to the universal ribosomal protein uL24 family. As to quaternary structure, component of the mitochondrial large ribosomal subunit (mt-LSU). Mature yeast 74S mitochondrial ribosomes consist of a small (37S) and a large (54S) subunit. The 37S small subunit contains a 15S ribosomal RNA (15S mt-rRNA) and at least 32 different proteins. The 54S large subunit contains a 21S rRNA (21S mt-rRNA) and at least 45 different proteins. uL24m forms the wall of the exit tunnel.

Its subcellular location is the mitochondrion. Its function is as follows. Component of the mitochondrial ribosome (mitoribosome), a dedicated translation machinery responsible for the synthesis of mitochondrial genome-encoded proteins, including at least some of the essential transmembrane subunits of the mitochondrial respiratory chain. The mitoribosomes are attached to the mitochondrial inner membrane and translation products are cotranslationally integrated into the membrane. In Schizosaccharomyces pombe (strain 972 / ATCC 24843) (Fission yeast), this protein is Large ribosomal subunit protein uL24m (mrpl40).